The sequence spans 654 residues: Spindle assembly abnormal protein 6 homolog (654 aa).

The PISA domain maps to 39–91; that stretch reads VHRKDLVIRLTDDTDPFFLYNLVISEEDFQSLKLQQGLLVDFLAFPQKFIDLL. Residues 175–471 are a coiled coil; the sequence is TRQLHITQET…QLLKNNEKLI (297 aa). At Ser509 the chain carries Phosphoserine. Residues 568 to 589 form a disordered region; it reads ASIDGQPGAAVNRPCSNDKENG. Ser612 is subject to Phosphoserine. A compositionally biased stretch (low complexity) spans 634-644; that stretch reads SKPTVLPSSSS. The segment at 634-654 is disordered; that stretch reads SKPTVLPSSSSAYFPGQLPSS. Phosphoserine is present on Ser654.

Nine homodimers form a cartwheel structure with an internal diameter of 23 nm and radial spokes connecting to the microtubule triplets. Forms a complex with CPAP and STIL. Interacts with FBXW5. Interacts with NUP62 and TUBG1 at the centrosome. Interacts with CENATAC; the interaction increases with CENATAC acetylation. Interacts with FZR1; the interaction is regulated by CENATAC and leads to SASS6 proteasomal degradation. Ubiquitinated by the SCF(FBXW5) E3 ubiquitin-protein ligase complex during S phase, leading to its degradation and preventing centriole reduplication. Ubiquitinated by the anaphase promoting complex/cyclosome (APC/C) E3 ubiquitin-protein ligase complex, leading to its degradation and preventing centriole reduplication.

The protein resides in the cytoplasm. It is found in the cytoskeleton. The protein localises to the microtubule organizing center. Its subcellular location is the centrosome. It localises to the centriole. Its function is as follows. Central scaffolding component of the centrioles ensuring their 9-fold symmetry. Required for centrosome biogenesis and duplication. Required both for mother-centriole-dependent centriole duplication and deuterosome-dependent centriole amplification in multiciliated cells. Not required for centriole formation in embryonic stem cells but necessary to maintain centriole architecture. Required for the recruitment of STIL to the procentriole and for STIL-mediated centriole amplification. The sequence is that of Spindle assembly abnormal protein 6 homolog from Mus musculus (Mouse).